Reading from the N-terminus, the 100-residue chain is Replication restart protein PriB (100 aa).

The region spanning 1–100 is the SSB domain; sequence MTNRMELSGT…VLHADNITQI (100 aa).

The protein belongs to the PriB family. As to quaternary structure, homodimer. Interacts with PriA and DnaT. Component of the replication restart primosome. Primosome assembly occurs via a 'hand-off' mechanism. PriA binds to replication forks, subsequently PriB then DnaT bind; DnaT then displaces ssDNA to generate the helicase loading substrate.

Functionally, involved in the restart of stalled replication forks, which reloads the replicative helicase on sites other than the origin of replication; the PriA-PriB pathway is the major replication restart pathway. During primosome assembly it facilitates complex formation between PriA and DnaT on DNA; stabilizes PriA on DNA. Stimulates the DNA unwinding activity of PriA helicase. The polypeptide is Replication restart protein PriB (Vibrio parahaemolyticus serotype O3:K6 (strain RIMD 2210633)).